We begin with the raw amino-acid sequence, 335 residues long: 3-hydroxyisobutyrate dehydrogenase, mitochondrial (335 aa).

The N-terminal 35 residues, Met1–Met35, are a transit peptide targeting the mitochondrion. Thr39 to Asp68 serves as a coordination point for NAD(+). 3 positions are modified to N6-acetyllysine; alternate: Lys59, Lys75, and Lys78. An N6-succinyllysine; alternate mark is found at Lys59, Lys75, and Lys78. At Lys94 the chain carries N6-succinyllysine. NAD(+)-binding positions include Leu102 to Pro103 and Asn107. Residue Lys120 is modified to N6-acetyllysine. Thr133 is a binding site for NAD(+). Lys140 carries the post-translational modification N6-succinyllysine. An N6-acetyllysine modification is found at Lys144. Position 148 is an N6-acetyllysine; alternate (Lys148). Lys148 is subject to N6-succinyllysine; alternate. The active site involves Lys208. An N6-acetyllysine; alternate mark is found at Lys237 and Lys241. N6-succinyllysine; alternate occurs at positions 237 and 241. Lys283 provides a ligand contact to NAD(+). Lys296 is modified (N6-succinyllysine). Lys320 is subject to N6-acetyllysine; alternate. An N6-succinyllysine; alternate modification is found at Lys320.

The protein belongs to the HIBADH-related family. 3-hydroxyisobutyrate dehydrogenase subfamily. In terms of assembly, homodimer.

It localises to the mitochondrion. It catalyses the reaction 3-hydroxy-2-methylpropanoate + NAD(+) = 2-methyl-3-oxopropanoate + NADH + H(+). Its pathway is amino-acid degradation; L-valine degradation. The protein is 3-hydroxyisobutyrate dehydrogenase, mitochondrial (Hibadh) of Mus musculus (Mouse).